The primary structure comprises 456 residues: Adenylosuccinate synthetase isozyme 2 (456 aa).

The segment at 1 to 24 (MAFAETNPAASSLPNGDCGRPRAR) is disordered. GTP is bound by residues 39 to 45 (GDEGKGK) and 67 to 69 (GHT). The active-site Proton acceptor is the aspartate 40. Positions 40 and 67 each coordinate Mg(2+). Aspartate 40 is a binding site for substrate. IMP is bound by residues 40–43 (DEGK), 65–68 (NAGH), threonine 162, arginine 176, asparagine 255, threonine 270, and arginine 334. Histidine 68 acts as the Proton donor in catalysis. 330–336 (VTTGRKR) contacts substrate. GTP contacts are provided by residues arginine 336, 362–364 (KLD), and 444–447 (GVGK).

It belongs to the adenylosuccinate synthetase family. Homodimer. Mg(2+) serves as cofactor. As to expression, widely expressed.

It localises to the cytoplasm. It is found in the mitochondrion. It carries out the reaction IMP + L-aspartate + GTP = N(6)-(1,2-dicarboxyethyl)-AMP + GDP + phosphate + 2 H(+). It participates in purine metabolism; AMP biosynthesis via de novo pathway; AMP from IMP: step 1/2. Its activity is regulated as follows. Inhibited competitively by AMP and IMP and non-competitively by fructose 1,6-bisphosphate. Plays an important role in the de novo pathway and in the salvage pathway of purine nucleotide biosynthesis. Catalyzes the first committed step in the biosynthesis of AMP from IMP. The polypeptide is Adenylosuccinate synthetase isozyme 2 (Sus scrofa (Pig)).